Reading from the N-terminus, the 349-residue chain is Protein RecA (349 aa).

ATP is bound at residue 65–72 (GPESSGKT).

Belongs to the RecA family.

It localises to the cytoplasm. Its function is as follows. Can catalyze the hydrolysis of ATP in the presence of single-stranded DNA, the ATP-dependent uptake of single-stranded DNA by duplex DNA, and the ATP-dependent hybridization of homologous single-stranded DNAs. It interacts with LexA causing its activation and leading to its autocatalytic cleavage. This is Protein RecA from Azotobacter vinelandii (strain DJ / ATCC BAA-1303).